A 240-amino-acid chain; its full sequence is Competence protein ComFC (240 aa).

The protein belongs to the ComF/GntX family. In terms of assembly, monomer and dimer in solution. Interacts with ComFA and DprA; ComFA-ComFC form rings about 150 Angstroms in diameter with apparent 6-fold symmetry.

Involved in transformation (genetic competence for DNA uptake). This is Competence protein ComFC (comFC) from Bacillus subtilis (strain 168).